We begin with the raw amino-acid sequence, 146 residues long: Lipoprotein signal peptidase (146 aa).

3 helical membrane-spanning segments follow: residues Gly-10–Phe-30, Phe-54–Leu-74, and Phe-80–Leu-100. Residues Asp-110 and Asp-127 contribute to the active site. Residues Phe-118–Leu-138 form a helical membrane-spanning segment.

This sequence belongs to the peptidase A8 family.

The protein localises to the cell inner membrane. It carries out the reaction Release of signal peptides from bacterial membrane prolipoproteins. Hydrolyzes -Xaa-Yaa-Zaa-|-(S,diacylglyceryl)Cys-, in which Xaa is hydrophobic (preferably Leu), and Yaa (Ala or Ser) and Zaa (Gly or Ala) have small, neutral side chains.. It functions in the pathway protein modification; lipoprotein biosynthesis (signal peptide cleavage). This protein specifically catalyzes the removal of signal peptides from prolipoproteins. The chain is Lipoprotein signal peptidase from Wolinella succinogenes (strain ATCC 29543 / DSM 1740 / CCUG 13145 / JCM 31913 / LMG 7466 / NCTC 11488 / FDC 602W) (Vibrio succinogenes).